Reading from the N-terminus, the 107-residue chain is Polyketide synthase CurG (107 aa).

The protein operates within antibiotic biosynthesis; curamycin biosynthesis. The chain is Polyketide synthase CurG (curG) from Streptomyces cyaneus (Streptomyces curacoi).